Reading from the N-terminus, the 351-residue chain is Uroporphyrinogen decarboxylase (351 aa).

Substrate contacts are provided by residues 25 to 29 (RQAGR), aspartate 74, tyrosine 151, serine 206, and histidine 325.

This sequence belongs to the uroporphyrinogen decarboxylase family. As to quaternary structure, homodimer.

The protein localises to the cytoplasm. The enzyme catalyses uroporphyrinogen III + 4 H(+) = coproporphyrinogen III + 4 CO2. The protein operates within porphyrin-containing compound metabolism; protoporphyrin-IX biosynthesis; coproporphyrinogen-III from 5-aminolevulinate: step 4/4. Its function is as follows. Catalyzes the decarboxylation of four acetate groups of uroporphyrinogen-III to yield coproporphyrinogen-III. The chain is Uroporphyrinogen decarboxylase from Chlorobium limicola (strain DSM 245 / NBRC 103803 / 6330).